The primary structure comprises 500 residues: Probable cytosol aminopeptidase (500 aa).

Lysine 264 and aspartate 269 together coordinate Mn(2+). Residue lysine 276 is part of the active site. Residues aspartate 287, aspartate 346, and glutamate 348 each contribute to the Mn(2+) site. The active site involves arginine 350.

It belongs to the peptidase M17 family. It depends on Mn(2+) as a cofactor.

It localises to the cytoplasm. It carries out the reaction Release of an N-terminal amino acid, Xaa-|-Yaa-, in which Xaa is preferably Leu, but may be other amino acids including Pro although not Arg or Lys, and Yaa may be Pro. Amino acid amides and methyl esters are also readily hydrolyzed, but rates on arylamides are exceedingly low.. The enzyme catalyses Release of an N-terminal amino acid, preferentially leucine, but not glutamic or aspartic acids.. Its function is as follows. Presumably involved in the processing and regular turnover of intracellular proteins. Catalyzes the removal of unsubstituted N-terminal amino acids from various peptides. This Nitrobacter winogradskyi (strain ATCC 25391 / DSM 10237 / CIP 104748 / NCIMB 11846 / Nb-255) protein is Probable cytosol aminopeptidase.